A 175-amino-acid chain; its full sequence is MASKMCEPLVIGRVIGEVVDYFCPSVKMSVVYNNNKHVYNGHEFFPSSVTSKPRVEVHGGDLRSFFTLIMIDPDVPGPSDPYLREHLHWIVTDIPGTTDCSFGREVVGYEMPRPNIGIHRFVFLLFKQKKRQTISSAPVSRDQFSSRKFSEENELGSPVAAVFFNCQRETAARRR.

The protein belongs to the phosphatidylethanolamine-binding protein family.

The protein localises to the cytoplasm. Not known. In plants homozygous for the recessive allele of the SP gene, sympodial segments develop progressively fewer nodes until the shoot is terminated by two consecutive. inflorescences. The polypeptide is Protein SELF-PRUNING (SP) (Solanum lycopersicum (Tomato)).